A 152-amino-acid chain; its full sequence is Endoribonuclease YbeY (152 aa).

Zn(2+) is bound by residues His113, His117, and His123.

The protein belongs to the endoribonuclease YbeY family. The cofactor is Zn(2+).

The protein resides in the cytoplasm. In terms of biological role, single strand-specific metallo-endoribonuclease involved in late-stage 70S ribosome quality control and in maturation of the 3' terminus of the 16S rRNA. This Pseudoalteromonas atlantica (strain T6c / ATCC BAA-1087) protein is Endoribonuclease YbeY.